The primary structure comprises 183 residues: Small ribosomal subunit protein uS4c (183 aa).

Residues 82–143 enclose the S4 RNA-binding domain; it reads MRLDNILFRL…KQRSKALIQN (62 aa).

The protein belongs to the universal ribosomal protein uS4 family. In terms of assembly, part of the 30S ribosomal subunit. Contacts protein S5. The interaction surface between S4 and S5 is involved in control of translational fidelity.

The protein resides in the plastid. It localises to the chloroplast. In terms of biological role, one of the primary rRNA binding proteins, it binds directly to 16S rRNA where it nucleates assembly of the body of the 30S subunit. Its function is as follows. With S5 and S12 plays an important role in translational accuracy. This Babiana stricta (Baboon flower) protein is Small ribosomal subunit protein uS4c (rps4).